The chain runs to 387 residues: Erythronate-4-phosphate dehydrogenase (387 aa).

Substrate contacts are provided by serine 45 and threonine 67. Aspartate 147 lines the NAD(+) pocket. The active site involves arginine 208. Aspartate 232 is a binding site for NAD(+). The active site involves glutamate 237. The active-site Proton donor is histidine 254. NAD(+) is bound at residue glycine 257. Residue tyrosine 258 participates in substrate binding.

This sequence belongs to the D-isomer specific 2-hydroxyacid dehydrogenase family. PdxB subfamily. In terms of assembly, homodimer.

The protein resides in the cytoplasm. The enzyme catalyses 4-phospho-D-erythronate + NAD(+) = (R)-3-hydroxy-2-oxo-4-phosphooxybutanoate + NADH + H(+). Its pathway is cofactor biosynthesis; pyridoxine 5'-phosphate biosynthesis; pyridoxine 5'-phosphate from D-erythrose 4-phosphate: step 2/5. Catalyzes the oxidation of erythronate-4-phosphate to 3-hydroxy-2-oxo-4-phosphonooxybutanoate. The protein is Erythronate-4-phosphate dehydrogenase of Shewanella woodyi (strain ATCC 51908 / MS32).